The following is a 468-amino-acid chain: MPREIINLQVGQCGNQVGSEFWRKLCQEHGIAKDGRLEDFATLGGDRKDVFFYQADDEQYIPRAILLDLEPRVINGIQTSDLRNLFNPENIFISKEGGGAGNNWASGYTQGEAVQETLLDMIDREAEYCDSLEGFNMCHSIAGGTGSGMGSYMLELISDRYSKKLIQTYSVFPNQSESSDVVVQPYNSLLTLKRLTLHADAVVVLDNTALDKIAVERLHLHKPDVQQINSLIATVMAASTTTLRYPGYMNNDLVGLVASLIPTPRCHFLMTGYTPLTAENAAGQVTSNIRKTTVLDVMRRLLQPKNIMVSTHTKSRDIANAKYISILNIIQGEVDPSQVHKSLQRIRERKQANFIEWGPASIQVALSKKSPYVQTAHRVSGLMLANHTSVRHLFNKVLRDYEKLMGPKQERQAFMQAYRDVPRFADAAGGGTALLEEFADAKEVVQDLANEYAACESADYIQRQMMAS.

142–148 (AGGTGSG) serves as a coordination point for GTP.

It belongs to the tubulin family.

It localises to the cytoplasm. It is found in the cytoskeleton. The protein resides in the microtubule organizing center. In terms of biological role, tubulin is the major constituent of microtubules. The gamma chain is found at microtubule organizing centers (MTOC) such as the spindle poles, suggesting that it is involved in the minus-end nucleation of microtubule assembly. This chain is Tubulin gamma chain (TUBG), found in Chlamydomonas reinhardtii (Chlamydomonas smithii).